Here is a 449-residue protein sequence, read N- to C-terminus: Exodeoxyribonuclease 7 large subunit (449 aa).

The protein belongs to the XseA family. Heterooligomer composed of large and small subunits.

The protein localises to the cytoplasm. It catalyses the reaction Exonucleolytic cleavage in either 5'- to 3'- or 3'- to 5'-direction to yield nucleoside 5'-phosphates.. In terms of biological role, bidirectionally degrades single-stranded DNA into large acid-insoluble oligonucleotides, which are then degraded further into small acid-soluble oligonucleotides. This is Exodeoxyribonuclease 7 large subunit from Salmonella schwarzengrund (strain CVM19633).